The chain runs to 612 residues: Cyclin-dependent kinase G1 (612 aa).

A compositionally biased stretch (basic and acidic residues) spans 26-54 (SRDVYVRQSGRDDERRQIKRPSDHDLRRN). Disordered stretches follow at residues 26-60 (SRDV…RHRS) and 239-278 (CYSS…EDQD). The Protein kinase domain maps to 297–593 (FQKLNKINEG…VEDALNHGWF (297 aa)). ATP is bound by residues 303-311 (INEGTYGIV) and Lys-326. A Phosphotyrosine modification is found at Tyr-308. Asp-426 functions as the Proton acceptor in the catalytic mechanism. At Ser-453 the chain carries Phosphoserine. Thr-459 is modified (phosphothreonine).

The protein belongs to the protein kinase superfamily. Ser/Thr protein kinase family. In terms of assembly, forms a complex with CYCL1-1. Associated with the spliceosome. Interacts with RS2Z33. In terms of tissue distribution, expressed in leaves and inflorescences. Lower levels of expression in roots and stems.

Its subcellular location is the nucleus speckle. It carries out the reaction L-seryl-[protein] + ATP = O-phospho-L-seryl-[protein] + ADP + H(+). The catalysed reaction is L-threonyl-[protein] + ATP = O-phospho-L-threonyl-[protein] + ADP + H(+). Its function is as follows. Cyclin-dependent kinase involved in pre-mRNA splicing. Required for the correct splicing of the sixth intron of CALS5 pre-mRNA. May stabilize the binding of U1 snRNP to this rare type of intron with a GC 5'SS. Involved in chromosome pairing and is required for the completion of synapsis in male meiocytes at high ambient temperatures. This chain is Cyclin-dependent kinase G1 (CDKG1), found in Arabidopsis thaliana (Mouse-ear cress).